The primary structure comprises 239 residues: Orotidine 5'-phosphate decarboxylase (239 aa).

Residues D10, K32, 59 to 68 (DLKLHDIPNT), T122, R184, Q193, G213, and R214 each bind substrate. The active-site Proton donor is K61.

This sequence belongs to the OMP decarboxylase family. Type 1 subfamily. Homodimer.

It carries out the reaction orotidine 5'-phosphate + H(+) = UMP + CO2. It functions in the pathway pyrimidine metabolism; UMP biosynthesis via de novo pathway; UMP from orotate: step 2/2. Catalyzes the decarboxylation of orotidine 5'-monophosphate (OMP) to uridine 5'-monophosphate (UMP). In Shouchella clausii (strain KSM-K16) (Alkalihalobacillus clausii), this protein is Orotidine 5'-phosphate decarboxylase.